Consider the following 192-residue polypeptide: 3-hydroxyanthranilate 3,4-dioxygenase (192 aa).

An O2-binding site is contributed by Arg50. Fe cation contacts are provided by His54, Glu60, and His102. Residue Glu60 participates in substrate binding. Substrate-binding residues include Arg106 and Glu116. Cys131, Cys134, Cys168, and Cys171 together coordinate a divalent metal cation.

The protein belongs to the 3-HAO family. The cofactor is Fe(2+).

The protein localises to the cytoplasm. It carries out the reaction 3-hydroxyanthranilate + O2 = (2Z,4Z)-2-amino-3-carboxymuconate 6-semialdehyde. The protein operates within cofactor biosynthesis; NAD(+) biosynthesis; quinolinate from L-kynurenine: step 3/3. Catalyzes the oxidative ring opening of 3-hydroxyanthranilate to 2-amino-3-carboxymuconate semialdehyde, which spontaneously cyclizes to quinolinate. This is 3-hydroxyanthranilate 3,4-dioxygenase (bna1) from Neosartorya fischeri (strain ATCC 1020 / DSM 3700 / CBS 544.65 / FGSC A1164 / JCM 1740 / NRRL 181 / WB 181) (Aspergillus fischerianus).